A 254-amino-acid polypeptide reads, in one-letter code: Imidazole glycerol phosphate synthase subunit HisF (254 aa).

Residues Asp-11 and Asp-130 contribute to the active site.

It belongs to the HisA/HisF family. In terms of assembly, heterodimer of HisH and HisF.

The protein resides in the cytoplasm. The enzyme catalyses 5-[(5-phospho-1-deoxy-D-ribulos-1-ylimino)methylamino]-1-(5-phospho-beta-D-ribosyl)imidazole-4-carboxamide + L-glutamine = D-erythro-1-(imidazol-4-yl)glycerol 3-phosphate + 5-amino-1-(5-phospho-beta-D-ribosyl)imidazole-4-carboxamide + L-glutamate + H(+). It participates in amino-acid biosynthesis; L-histidine biosynthesis; L-histidine from 5-phospho-alpha-D-ribose 1-diphosphate: step 5/9. In terms of biological role, IGPS catalyzes the conversion of PRFAR and glutamine to IGP, AICAR and glutamate. The HisF subunit catalyzes the cyclization activity that produces IGP and AICAR from PRFAR using the ammonia provided by the HisH subunit. This chain is Imidazole glycerol phosphate synthase subunit HisF, found in Microcystis aeruginosa (strain NIES-843 / IAM M-2473).